The following is a 393-amino-acid chain: Short-chain dehydrogenase/reductase family 42E member 1 (393 aa).

The Proton acceptor role is filled by Y152. K156 serves as a coordination point for NAD(+). 2 helical membrane-spanning segments follow: residues 282–302 (LPLTLVYCFAFLTEMVHFILG) and 371–391 (GLLVFLLIIAVLIWLPSSVIL).

The protein belongs to the 3-beta-HSD family.

It localises to the membrane. The protein is Short-chain dehydrogenase/reductase family 42E member 1 (SDR42E1) of Macaca fascicularis (Crab-eating macaque).